Here is a 301-residue protein sequence, read N- to C-terminus: Ribonuclease Z (301 aa).

Zn(2+) contacts are provided by histidine 60, histidine 62, aspartate 64, histidine 65, histidine 137, aspartate 207, and histidine 265. Aspartate 64 functions as the Proton acceptor in the catalytic mechanism.

The protein belongs to the RNase Z family. In terms of assembly, homodimer. Requires Zn(2+) as cofactor.

It carries out the reaction Endonucleolytic cleavage of RNA, removing extra 3' nucleotides from tRNA precursor, generating 3' termini of tRNAs. A 3'-hydroxy group is left at the tRNA terminus and a 5'-phosphoryl group is left at the trailer molecule.. In terms of biological role, zinc phosphodiesterase, which displays some tRNA 3'-processing endonuclease activity. Probably involved in tRNA maturation, by removing a 3'-trailer from precursor tRNA. The protein is Ribonuclease Z of Exiguobacterium sibiricum (strain DSM 17290 / CCUG 55495 / CIP 109462 / JCM 13490 / 255-15).